The chain runs to 550 residues: Ribosomal protein S6 kinase beta (550 aa).

One can recognise a Protein kinase domain in the interval 83 to 344; that stretch reads FQLLKVLGKG…AEEIKSHAFF (262 aa). Residues 89–97 and Lys-115 each bind ATP; that span reads LGKGGYGKV. Residue Asp-210 is the Proton acceptor of the active site. The 71-residue stretch at 345-415 folds into the AGC-kinase C-terminal domain; the sequence is KTTDWNLVYA…VAPSVLEMMN (71 aa). Thr-404 is subject to Phosphothreonine. Disordered stretches follow at residues 433 to 466 and 484 to 550; these read RAGA…GPNS and TAGG…KRVM. Phosphoserine is present on Ser-439. Low complexity predominate over residues 520–534; that stretch reads TTTGNGSTTTTRPSN.

This sequence belongs to the protein kinase superfamily. AGC Ser/Thr protein kinase family. S6 kinase subfamily. The cofactor is Mg(2+). Post-translationally, may be phosphorylated on Thr-404 by let-363/TOR.

The protein resides in the cell projection. It is found in the axon. The protein localises to the perikaryon. It catalyses the reaction L-seryl-[protein] + ATP = O-phospho-L-seryl-[protein] + ADP + H(+). The catalysed reaction is L-threonyl-[protein] + ATP = O-phospho-L-threonyl-[protein] + ADP + H(+). Functionally, serine/threonine-protein kinase which regulates mRNA translation. Negatively regulates lifespan and resistance to starvation, oxidative stress, protein aggregation and P.aeruginosa-mediated infection. May regulate these processes by preventing the activation of transcription factor hif-1. Required, probably downstream of let-363/TOR, for the establishment of the proper number of germline progenitors by promoting cell cycle progression and preventing differentiation during larval development. Regulates germ cell size. In addition required for sperm production and embryo viability. Involved in axon regeneration of PLM and ALM neurons by inhibiting growth cone formation early after axotomy and later by inhibiting axon extension. Functions in axon regeneration and lifespan probably by preventing aak-2/AMPK activation. Negatively regulates autophagy. This Caenorhabditis elegans protein is Ribosomal protein S6 kinase beta.